Reading from the N-terminus, the 150-residue chain is MIKVKIVRLKEKASLPAYATAHAAGMDVSACLDAPVTLEPSSSALIPTGLAIELPEGYEAQLRPRSGLALRHLISLPNSPATIDADYRGEVGVILINHGREPFTVNHGDRIAQMVVSKVDRVAFEEVDSLSDTERGEGGFGHTGVASKAE.

Substrate contacts are provided by residues 65-67, N78, and 82-84; these read RSG and TID. Positions 130-150 are disordered; it reads LSDTERGEGGFGHTGVASKAE.

Belongs to the dUTPase family. Requires Mg(2+) as cofactor.

It carries out the reaction dUTP + H2O = dUMP + diphosphate + H(+). Its pathway is pyrimidine metabolism; dUMP biosynthesis; dUMP from dCTP (dUTP route): step 2/2. In terms of biological role, this enzyme is involved in nucleotide metabolism: it produces dUMP, the immediate precursor of thymidine nucleotides and it decreases the intracellular concentration of dUTP so that uracil cannot be incorporated into DNA. The sequence is that of Deoxyuridine 5'-triphosphate nucleotidohydrolase from Chlorobaculum parvum (strain DSM 263 / NCIMB 8327) (Chlorobium vibrioforme subsp. thiosulfatophilum).